Here is a 230-residue protein sequence, read N- to C-terminus: Maleylacetoacetate isomerase (230 aa).

The 89-residue stretch at 7 to 95 (LRVTLYTYFR…YLDEAFPDNP (89 aa)) folds into the GST N-terminal domain. Glutathione-binding positions include 17–22 (SSCSAR), glutamine 46, valine 60, 79–80 (QS), glutamine 123, and 127–129 (NLR). Residues 104–226 (NPQQRALVRS…HWRTQQDTPT (123 aa)) form the GST C-terminal domain.

It belongs to the GST superfamily. Zeta family. It depends on glutathione as a cofactor.

The protein localises to the cytoplasm. It carries out the reaction 4-maleylacetoacetate = 4-fumarylacetoacetate. The protein operates within amino-acid degradation; L-phenylalanine degradation; acetoacetate and fumarate from L-phenylalanine: step 5/6. The protein is Maleylacetoacetate isomerase (maiA) of Emericella nidulans (strain FGSC A4 / ATCC 38163 / CBS 112.46 / NRRL 194 / M139) (Aspergillus nidulans).